The following is a 469-amino-acid chain: 3-isopropylmalate dehydratase large subunit (469 aa).

[4Fe-4S] cluster contacts are provided by Cys347, Cys407, and Cys410.

The protein belongs to the aconitase/IPM isomerase family. LeuC type 1 subfamily. Heterodimer of LeuC and LeuD. [4Fe-4S] cluster is required as a cofactor.

It carries out the reaction (2R,3S)-3-isopropylmalate = (2S)-2-isopropylmalate. The protein operates within amino-acid biosynthesis; L-leucine biosynthesis; L-leucine from 3-methyl-2-oxobutanoate: step 2/4. Its function is as follows. Catalyzes the isomerization between 2-isopropylmalate and 3-isopropylmalate, via the formation of 2-isopropylmaleate. The chain is 3-isopropylmalate dehydratase large subunit from Prochlorococcus marinus (strain NATL1A).